We begin with the raw amino-acid sequence, 257 residues long: Pyridoxine 5'-phosphate synthase (257 aa).

Asn-16 lines the 3-amino-2-oxopropyl phosphate pocket. 18–19 (DH) provides a ligand contact to 1-deoxy-D-xylulose 5-phosphate. 3-amino-2-oxopropyl phosphate is bound at residue Arg-27. Residue His-52 is the Proton acceptor of the active site. 1-deoxy-D-xylulose 5-phosphate contacts are provided by Arg-54 and His-59. Glu-79 serves as the catalytic Proton acceptor. Thr-109 serves as a coordination point for 1-deoxy-D-xylulose 5-phosphate. His-200 (proton donor) is an active-site residue. Residues Gly-201 and 222–223 (GH) each bind 3-amino-2-oxopropyl phosphate.

This sequence belongs to the PNP synthase family. Homooctamer; tetramer of dimers.

It localises to the cytoplasm. The enzyme catalyses 3-amino-2-oxopropyl phosphate + 1-deoxy-D-xylulose 5-phosphate = pyridoxine 5'-phosphate + phosphate + 2 H2O + H(+). The protein operates within cofactor biosynthesis; pyridoxine 5'-phosphate biosynthesis; pyridoxine 5'-phosphate from D-erythrose 4-phosphate: step 5/5. Catalyzes the complicated ring closure reaction between the two acyclic compounds 1-deoxy-D-xylulose-5-phosphate (DXP) and 3-amino-2-oxopropyl phosphate (1-amino-acetone-3-phosphate or AAP) to form pyridoxine 5'-phosphate (PNP) and inorganic phosphate. The polypeptide is Pyridoxine 5'-phosphate synthase (Burkholderia pseudomallei (strain 1710b)).